Reading from the N-terminus, the 272-residue chain is Phosphoglycolate phosphatase (272 aa).

Residue Asp19 is the Nucleophile of the active site. Residues Asp19, Asp21, and Asp182 each coordinate Mg(2+).

This sequence belongs to the HAD-like hydrolase superfamily. CbbY/CbbZ/Gph/YieH family. The cofactor is Mg(2+).

It catalyses the reaction 2-phosphoglycolate + H2O = glycolate + phosphate. Its pathway is organic acid metabolism; glycolate biosynthesis; glycolate from 2-phosphoglycolate: step 1/1. Its function is as follows. Specifically catalyzes the dephosphorylation of 2-phosphoglycolate. Is involved in the dissimilation of the intracellular 2-phosphoglycolate formed during the DNA repair of 3'-phosphoglycolate ends, a major class of DNA lesions induced by oxidative stress. In Pseudomonas putida (strain ATCC 47054 / DSM 6125 / CFBP 8728 / NCIMB 11950 / KT2440), this protein is Phosphoglycolate phosphatase.